The chain runs to 127 residues: Fluoride-specific ion channel FluC (127 aa).

The next 4 helical transmembrane spans lie at 8–28, 37–57, 68–88, and 100–120; these read LLIA…QYWF, PWGT…VYAI, WKFL…TFSY, and ILFL…AFAG. Gly-78 and Thr-81 together coordinate Na(+).

It belongs to the fluoride channel Fluc/FEX (TC 1.A.43) family.

The protein resides in the cell inner membrane. It carries out the reaction fluoride(in) = fluoride(out). With respect to regulation, na(+) is not transported, but it plays an essential structural role and its presence is essential for fluoride channel function. Its function is as follows. Fluoride-specific ion channel. Important for reducing fluoride concentration in the cell, thus reducing its toxicity. In Leptospira interrogans serogroup Icterohaemorrhagiae serovar Lai (strain 56601), this protein is Fluoride-specific ion channel FluC.